We begin with the raw amino-acid sequence, 238 residues long: 7-cyano-7-deazaguanine synthase (238 aa).

14-24 (FSGGQDSATCL) is a binding site for ATP. Zn(2+) contacts are provided by Cys202, Cys217, Cys220, and Cys223.

Belongs to the QueC family. It depends on Zn(2+) as a cofactor.

It carries out the reaction 7-carboxy-7-deazaguanine + NH4(+) + ATP = 7-cyano-7-deazaguanine + ADP + phosphate + H2O + H(+). The protein operates within purine metabolism; 7-cyano-7-deazaguanine biosynthesis. Functionally, catalyzes the ATP-dependent conversion of 7-carboxy-7-deazaguanine (CDG) to 7-cyano-7-deazaguanine (preQ(0)). This Nitrobacter winogradskyi (strain ATCC 25391 / DSM 10237 / CIP 104748 / NCIMB 11846 / Nb-255) protein is 7-cyano-7-deazaguanine synthase.